The chain runs to 1637 residues: MEYESSEISDITTGSCKKRLTFLKCILSDTTSDQKWAAEFGEDTEGHQFSLDYLLDTFIVLYDECSNSSLRREKGVSDFLKLSKPFVHIVRKLRLSRDDFDILKIIGRGAFGEVCVVQMISTEKVYAMKILNKWEMLKRAETACFREERDVLVFGDRQWITNLHYAFQDNINLYLVMDYYCGGDLLTLLSKFEDKLPEDMAKFYITEMILAINSIHQIRYVHRDIKPDNVLLDKRGHVRLADFGSCLRLDKDGTVQSNVAVGTPDYISPEILRAMEDGKGRYGTECDWWSLGVCMYEMLYGETPFYAESLVETYGKIMNHQNCFNLPSQETLNYKVSETSQDLLCKLICIPENRLGQNGIQDFMDHPWFVGIDWKNIRQGPAPYVPEVSSPTDTSNFDVDDNDVRLTDSIPPSANPAFSGFHLPFIGFTFSLTSSSTLDSKKNQSSGFGDDTLDTISSPQLAILPSNNSETPVDSVQLKALNDQLAALKQEKAELSKQHNEVFERLKTQDSELQDAISQRNIAMMEYSEVTEKLSELRNQKQKLSRQVRDKEEELDGAMQKNDSLRNELRKSDKTRRELELHIEDAVIEAAKEKKLREHAEDCCRQLQMELRKGSSSVETTMPLSISSEMSSYEIERLELQFSEKLSHQQTRHNMELEALREQFSELENANLALTKELQQTQERLKYTQMESITDSAETLLELKKQHDLEKSSWFEEKQRLSSEVNLKSKSLKELQAEDDEIFKELRMKREAITLWERQMAEIIQWVSDEKDARGYLQALATKMTEELEYLKHVGTFNNNGVDNKNWRNRRSQKLDKMELLNLQSALQREIQAKNMISDELSQTRSDLISTQKEVRDYKKRYDSILHDFQKKETELRDLQKGGLEYSESFLNKSTHHGLSSAFFRDMSKNSEIIDSAESFGNESGDNFTPNFFQSGNSGMLFNYEPKYAGKNNKDHSSMKEASVSDLSREESDQLVKESQKKVPGNTAIHQFLVRTFSSPTKCNHCTSLMVGLTRQGVVCEICGFACHTICCQKVPTTCPVPMDQTKRPLGIDPTRGIGTAYEGYVKVPKSGVIKRGWIRQFVVVCDFKLFLYDISPDRCALPSVSVSQVLDMRDPEFSVGSVRESDVIHAAKKDVPCIFKIKTALIDGGLSLNTLMLADNESEKSKWVIALGELHRILKRNSLPNTAIFKVNEILDNTLSLIRNALCSVIIYPNQILLGTEDGLFYINLDQYEIARIGESKKILQLWYIEEEQILVILCGKQRNLRLLPIRALEASDVEWIKVVESKNCISACTGIIRRFPNIVYSFIIALKRPNNHTQIVVYEINRTRTRHQKTCEFTIGYMAQHLQILSDMRLVVAHQSGFTAYFLRGEATAMSLVHPENQLCAFLNYSGVDAVRVIEILCPSGGNFGEYLLVFQTLAIYVDLQGRKSRDREIMYPAFPTYITFCDGHLLVFSDTHLDIFNTQTAEWVQSIGLKQSLPLNNLGNVVLSSVNDTPLIVYLSNIHTKGLLQYRDGNRKGLPSIKRRFSIREINKTIKSDRRSKMISAPTNFNHISHMGPGDGIQNQRLLDLPTTLETADQACSPIIHSLSCIPQSRKSNFLEQVDANSDDYGNDNIISRTPSPMASSFMDGLSNND.

One can recognise a Protein kinase domain in the interval 100–369 (FDILKIIGRG…IQDFMDHPWF (270 aa)). ATP-binding positions include 106–114 (IGRGAFGEV) and lysine 129. Residue aspartate 224 is the Proton acceptor of the active site. The 71-residue stretch at 370-440 (VGIDWKNIRQ…SLTSSSTLDS (71 aa)) folds into the AGC-kinase C-terminal domain. 3 coiled-coil regions span residues 473–587 (VDSV…EDAV), 643–688 (SEKL…LKYT), and 839–881 (DELS…DLQK). Residues 538–575 (RNQKQKLSRQVRDKEEELDGAMQKNDSLRNELRKSDKT) form a disordered region. The span at 563–575 (DSLRNELRKSDKT) shows a compositional bias: basic and acidic residues. The residue at position 895 (threonine 895) is a Phosphothreonine. Positions 952-971 (NNKDHSSMKEASVSDLSREE) are disordered. The Phorbol-ester/DAG-type zinc-finger motif lies at 989–1039 (IHQFLVRTFSSPTKCNHCTSLMVGLTRQGVVCEICGFACHTICCQKVPTTC). The 119-residue stretch at 1059–1177 (GTAYEGYVKV…WVIALGELHR (119 aa)) folds into the PH domain. Positions 1203–1489 (IRNALCSVII…LPLNNLGNVV (287 aa)) constitute a CNH domain. Residues 1546-1559 (ISAPTNFNHISHMG) enclose the CRIB domain. A Phosphoserine modification is found at serine 1584. Residues 1611–1637 (DYGNDNIISRTPSPMASSFMDGLSNND) are disordered. Polar residues predominate over residues 1616–1626 (NIISRTPSPMA).

This sequence belongs to the protein kinase superfamily. AGC Ser/Thr protein kinase family. DMPK subfamily. Interacts tightly with GTP-bound but not GDP-bound Cdc42.

The catalysed reaction is L-seryl-[protein] + ATP = O-phospho-L-seryl-[protein] + ADP + H(+). The enzyme catalyses L-threonyl-[protein] + ATP = O-phospho-L-threonyl-[protein] + ADP + H(+). In terms of biological role, acts as a downstream effector for the regulation of actin polymerization by Cdc42. The chain is Serine/threonine-protein kinase Genghis Khan (gek) from Drosophila melanogaster (Fruit fly).